The primary structure comprises 255 residues: Diphthine synthase (255 aa).

Residues L9, D85, V88, 113–114 (SI), L164, A207, and H232 contribute to the S-adenosyl-L-methionine site.

This sequence belongs to the diphthine synthase family. Homodimer.

It catalyses the reaction 2-[(3S)-amino-3-carboxypropyl]-L-histidyl-[translation elongation factor 2] + 3 S-adenosyl-L-methionine = diphthine-[translation elongation factor 2] + 3 S-adenosyl-L-homocysteine + 3 H(+). The protein operates within protein modification; peptidyl-diphthamide biosynthesis. Functionally, S-adenosyl-L-methionine-dependent methyltransferase that catalyzes the trimethylation of the amino group of the modified target histidine residue in translation elongation factor 2 (EF-2), to form an intermediate called diphthine. The three successive methylation reactions represent the second step of diphthamide biosynthesis. The polypeptide is Diphthine synthase (Methanococcus vannielii (strain ATCC 35089 / DSM 1224 / JCM 13029 / OCM 148 / SB)).